We begin with the raw amino-acid sequence, 351 residues long: DNA polymerase IV (351 aa).

In terms of domain architecture, UmuC spans 4-185 (IIHVDMDCFF…LPLAKIPGVG (182 aa)). 2 residues coordinate Mg(2+): D8 and D103. Residue E104 is part of the active site.

The protein belongs to the DNA polymerase type-Y family. Monomer. The cofactor is Mg(2+).

The protein localises to the cytoplasm. The catalysed reaction is DNA(n) + a 2'-deoxyribonucleoside 5'-triphosphate = DNA(n+1) + diphosphate. Its function is as follows. Poorly processive, error-prone DNA polymerase involved in untargeted mutagenesis. Copies undamaged DNA at stalled replication forks, which arise in vivo from mismatched or misaligned primer ends. These misaligned primers can be extended by PolIV. Exhibits no 3'-5' exonuclease (proofreading) activity. May be involved in translesional synthesis, in conjunction with the beta clamp from PolIII. This is DNA polymerase IV from Escherichia coli O157:H7.